The primary structure comprises 305 residues: Protoheme IX farnesyltransferase (305 aa).

9 helical membrane passes run 31–51 (VMSL…YSVH), 52–72 (PFIA…AGAI), 102–119 (ALSF…FMAL), 123–145 (LLAS…IWLK), 151–171 (NIVI…AAVS), 179–199 (IILF…LALF), 225–245 (ILIY…IGMN), 247–267 (FIYL…SGSL), and 284–304 (SIFY…ISLI).

It belongs to the UbiA prenyltransferase family. Protoheme IX farnesyltransferase subfamily.

Its subcellular location is the cell inner membrane. It catalyses the reaction heme b + (2E,6E)-farnesyl diphosphate + H2O = Fe(II)-heme o + diphosphate. The protein operates within porphyrin-containing compound metabolism; heme O biosynthesis; heme O from protoheme: step 1/1. Converts heme B (protoheme IX) to heme O by substitution of the vinyl group on carbon 2 of heme B porphyrin ring with a hydroxyethyl farnesyl side group. In Rickettsia felis (strain ATCC VR-1525 / URRWXCal2) (Rickettsia azadi), this protein is Protoheme IX farnesyltransferase.